The primary structure comprises 344 residues: Trace amine-associated receptor 8b (344 aa).

Residues 1-33 (MTSNFSQATLQLCYENVNASCIKTPYSPGLRVL) lie on the Extracellular side of the membrane. Asn-4 and Asn-18 each carry an N-linked (GlcNAc...) asparagine glycan. 2 disulfide bridges follow: Cys-21–Cys-185 and Cys-104–Cys-189. A helical transmembrane segment spans residues 34–54 (LYMVFGFGAVLAVCGNLLVVI). Residues 55 to 67 (SVLHFKQLHSPAN) lie on the Cytoplasmic side of the membrane. A helical transmembrane segment spans residues 68–88 (FLIASLASADFLVGISVMPFS). The Extracellular segment spans residues 89–102 (MVRSIESCWYFGDT). The chain crosses the membrane as a helical span at residues 103-127 (FCSLHSCCDAAFCYSSLFHLCFISV). Residues 128-146 (DRYIAVTEPLVYPTKFTMS) are Cytoplasmic-facing. The chain crosses the membrane as a helical span at residues 147–167 (VSGICISISWILPLVYSSAVF). Over 168–196 (YTGISATGIENLVSALNCVGGCQVAINQD) the chain is Extracellular. A helical membrane pass occupies residues 197 to 217 (WVLISFLLFFIPTLVMIILYS). Residues 218–256 (KIFLVAKQQAVKIETSISGSKGESSLESHKARVAKRERK) lie on the Cytoplasmic side of the membrane. The helical transmembrane segment at 257 to 277 (AAKTLGVTVMAFMVSWLPYTI) threads the bilayer. Residues 278-295 (DTLIDAFMGFITPAYVYE) lie on the Extracellular side of the membrane. The helical transmembrane segment at 296–319 (ICGWIAYYNSAMNPLIYAFFYPWF) threads the bilayer. At 320-344 (RKAIKLILSGKILKGHSSTTSLFSE) the chain is on the cytoplasmic side.

It belongs to the G-protein coupled receptor 1 family.

Its subcellular location is the cell membrane. Its function is as follows. Olfactory receptor activated by trace amines. Trace amine compounds are enriched in animal body fluids and act on trace amine-associated receptors (TAARs) to elicit both intraspecific and interspecific innate behaviors. Ligand-binding causes a conformation change that triggers signaling via G(s)-class of G alpha proteins (GNAL or GNAS). The sequence is that of Trace amine-associated receptor 8b from Rattus norvegicus (Rat).